Here is a 201-residue protein sequence, read N- to C-terminus: 3-isopropylmalate dehydratase small subunit (201 aa).

This sequence belongs to the LeuD family. LeuD type 1 subfamily. As to quaternary structure, heterodimer of LeuC and LeuD.

It catalyses the reaction (2R,3S)-3-isopropylmalate = (2S)-2-isopropylmalate. It functions in the pathway amino-acid biosynthesis; L-leucine biosynthesis; L-leucine from 3-methyl-2-oxobutanoate: step 2/4. In terms of biological role, catalyzes the isomerization between 2-isopropylmalate and 3-isopropylmalate, via the formation of 2-isopropylmaleate. The polypeptide is 3-isopropylmalate dehydratase small subunit (Mesorhizobium japonicum (strain LMG 29417 / CECT 9101 / MAFF 303099) (Mesorhizobium loti (strain MAFF 303099))).